The chain runs to 239 residues: tRNA (guanine-N(1)-)-methyltransferase (239 aa).

S-adenosyl-L-methionine contacts are provided by residues Gly115 and 134–139; that span reads MGDFVL. Residues 210-239 are disordered; the sequence is QQQREQRTQERRPDLWNRWQQIQNPTPPAP. Residues 211–224 are compositionally biased toward basic and acidic residues; that stretch reads QQREQRTQERRPDL.

This sequence belongs to the RNA methyltransferase TrmD family. As to quaternary structure, homodimer.

It is found in the cytoplasm. It catalyses the reaction guanosine(37) in tRNA + S-adenosyl-L-methionine = N(1)-methylguanosine(37) in tRNA + S-adenosyl-L-homocysteine + H(+). Its function is as follows. Specifically methylates guanosine-37 in various tRNAs. The sequence is that of tRNA (guanine-N(1)-)-methyltransferase from Synechococcus sp. (strain CC9311).